Here is a 129-residue protein sequence, read N- to C-terminus: Iron-sulfur cluster assembly 1 homolog, mitochondrial (129 aa).

A mitochondrion-targeting transit peptide spans 1 to 12 (MSASLVRATVRA). Fe cation is bound by residues cysteine 57, cysteine 121, and cysteine 123.

It belongs to the HesB/IscA family. As to quaternary structure, interacts with CRY2, but not with CRY1 (in vitro).

The protein localises to the mitochondrion. Functionally, involved in the maturation of mitochondrial 4Fe-4S proteins functioning late in the iron-sulfur cluster assembly pathway. Probably involved in the binding of an intermediate of Fe/S cluster assembly. This is Iron-sulfur cluster assembly 1 homolog, mitochondrial (ISCA1) from Bos taurus (Bovine).